The following is a 304-amino-acid chain: 15-cis-phytoene synthase (304 aa).

The protein belongs to the phytoene/squalene synthase family. ATP is required as a cofactor. Mn(2+) serves as cofactor. Requires Mg(2+) as cofactor.

It carries out the reaction 2 (2E,6E,10E)-geranylgeranyl diphosphate = 15-cis-phytoene + 2 diphosphate. It functions in the pathway carotenoid biosynthesis; astaxanthin biosynthesis. Its pathway is carotenoid biosynthesis; phytoene biosynthesis. Functionally, involved in the biosynthesis of carotenoids for the production of astaxanthin. Catalyzes the condensation of two molecules of geranylgeranyl diphosphate (GGPP) to give prephytoene diphosphate (PPPP) and the subsequent rearrangement of the cyclopropylcarbinyl intermediate to yield 15-cis phytoene. The protein is 15-cis-phytoene synthase (crtB) of Paracoccus sp. (strain N81106 / MBIC 01143) (Agrobacterium aurantiacum).